Here is a 148-residue protein sequence, read N- to C-terminus: Hemoglobin subunit beta-1 (148 aa).

Residues Glu3–His148 form the Globin domain. Residues His64 and His93 each contribute to the heme b site.

As to quaternary structure, heterotetramer of two alpha chains and two beta chains. Red blood cells.

In terms of biological role, involved in oxygen transport from gills to the various peripheral tissues. This is Hemoglobin subunit beta-1 (ba1) from Danio rerio (Zebrafish).